A 312-amino-acid polypeptide reads, in one-letter code: Acetyl-coenzyme A carboxylase carboxyl transferase subunit alpha (312 aa).

The CoA carboxyltransferase C-terminal domain maps to arginine 36–threonine 286.

This sequence belongs to the AccA family. Acetyl-CoA carboxylase is a heterohexamer composed of biotin carboxyl carrier protein (AccB), biotin carboxylase (AccC) and two subunits each of ACCase subunit alpha (AccA) and ACCase subunit beta (AccD).

The protein resides in the cytoplasm. It carries out the reaction N(6)-carboxybiotinyl-L-lysyl-[protein] + acetyl-CoA = N(6)-biotinyl-L-lysyl-[protein] + malonyl-CoA. It participates in lipid metabolism; malonyl-CoA biosynthesis; malonyl-CoA from acetyl-CoA: step 1/1. In terms of biological role, component of the acetyl coenzyme A carboxylase (ACC) complex. First, biotin carboxylase catalyzes the carboxylation of biotin on its carrier protein (BCCP) and then the CO(2) group is transferred by the carboxyltransferase to acetyl-CoA to form malonyl-CoA. The polypeptide is Acetyl-coenzyme A carboxylase carboxyl transferase subunit alpha (Helicobacter pylori (strain HPAG1)).